Reading from the N-terminus, the 205-residue chain is Isochorismatase domain-containing protein 2 (205 aa).

Phosphoserine is present on residues Ser7 and Ser202.

The protein belongs to the isochorismatase family. As to quaternary structure, interacts with CDKN2A.

The protein resides in the cytoplasm. The protein localises to the nucleus. In Homo sapiens (Human), this protein is Isochorismatase domain-containing protein 2 (ISOC2).